Reading from the N-terminus, the 183-residue chain is MDIDPYKEFGATVELLSFLPSDFFPSVRDLLDTASALYREALESPEHCSPNHTALRQAILCWGELMTLASWVGNNLEDPASREQVVNYVNTNMGLKIRQLLWFHISCLTFGRETVLEYLVSFGVWIRTPPAYRPPNAPILSTLPETTVVRRRGRSPRRRTPSPRRRRSQSPRRRRSQSPASQC.

Residues 136–183 (NAPILSTLPETTVVRRRGRSPRRRTPSPRRRRSQSPRRRRSQSPASQC) are disordered. Basic residues predominate over residues 149 to 176 (VRRRGRSPRRRTPSPRRRRSQSPRRRRS). Residues Ser155, Ser162, and Ser170 each carry the phosphoserine; by host modification. Residues 155-161 (SPRRRTP) form a 1; half-length repeat. The 3 X 8 AA repeats of S-P-R-R-R-[PR]-S-Q stretch occupies residues 155 to 177 (SPRRRTPSPRRRRSQSPRRRRSQ). The Bipartite nuclear localization signal motif lies at 158 to 175 (RRTPSPRRRRSQSPRRRR). 2 repeat units span residues 162 to 169 (SPRRRRSQ) and 170 to 177 (SPRRRRSQ). An RNA binding region spans residues 177 to 183 (QSPASQC).

This sequence belongs to the orthohepadnavirus core antigen family. Homodimerizes, then multimerizes. Interacts with cytosol exposed regions of viral L glycoprotein present in the reticulum-to-Golgi compartment. Interacts with human FLNB. Phosphorylated form interacts with host importin alpha; this interaction depends on the exposure of the NLS, which itself depends upon genome maturation and/or phosphorylation of the capsid protein. Interacts with host NUP153. Phosphorylated by host SRPK1, SRPK2, and maybe protein kinase C or GAPDH. Phosphorylation is critical for pregenomic RNA packaging. Protein kinase C phosphorylation is stimulated by HBx protein and may play a role in transport of the viral genome to the nucleus at the late step during the viral replication cycle.

The protein localises to the virion. It localises to the host cytoplasm. Self assembles to form an icosahedral capsid. Most capsids appear to be large particles with an icosahedral symmetry of T=4 and consist of 240 copies of capsid protein, though a fraction forms smaller T=3 particles consisting of 180 capsid proteins. Entering capsids are transported along microtubules to the nucleus. Phosphorylation of the capsid is thought to induce exposure of nuclear localization signal in the C-terminal portion of the capsid protein that allows binding to the nuclear pore complex via the importin (karyopherin-) alpha and beta. Capsids are imported in intact form through the nuclear pore into the nuclear basket, where it probably binds NUP153. Only capsids that contain the mature viral genome can release the viral DNA and capsid protein into the nucleoplasm. Immature capsids get stuck in the basket. Capsids encapsulate the pre-genomic RNA and the P protein. Pre-genomic RNA is reverse-transcribed into DNA while the capsid is still in the cytoplasm. The capsid can then either be directed to the nucleus, providing more genomes for transcription, or bud through the endoplasmic reticulum to provide new virions. In Pan troglodytes (Chimpanzee), this protein is Capsid protein.